We begin with the raw amino-acid sequence, 101 residues long: Putative membrane protein insertion efficiency factor (101 aa).

This sequence belongs to the UPF0161 family.

It is found in the cell membrane. Could be involved in insertion of integral membrane proteins into the membrane. The chain is Putative membrane protein insertion efficiency factor from Lacticaseibacillus casei (strain BL23) (Lactobacillus casei).